The following is a 672-amino-acid chain: Serine/threonine-protein kinase ppk16 (672 aa).

In terms of domain architecture, Protein kinase spans 31-279 (YRIESVVGEG…IDQIISHPYF (249 aa)). Residues 37-45 (VGEGSFGKV) and lysine 60 contribute to the ATP site. Aspartate 148 serves as the catalytic Proton acceptor. Position 231 is a phosphoserine (serine 231). Positions 375 to 384 (VSVMSNNQDS) are enriched in polar residues. Disordered regions lie at residues 375 to 396 (VSVM…DSSN), 416 to 436 (DTLS…ENYL), 464 to 572 (NSFG…YSNV), and 632 to 672 (SGRK…TDLL). Polar residues predominate over residues 472-487 (NLPQTTHVDTGEQNTP). Over residues 508–523 (SNSQNSPSKSSNLSIN) the composition is skewed to low complexity. The span at 531–541 (LQNTVISPQPT) shows a compositional bias: polar residues. Low complexity-rich tracts occupy residues 549–572 (RSLS…YSNV) and 639–649 (SSSSLMFNQSS).

This sequence belongs to the protein kinase superfamily. Ser/Thr protein kinase family.

Its subcellular location is the cytoplasm. It catalyses the reaction L-seryl-[protein] + ATP = O-phospho-L-seryl-[protein] + ADP + H(+). The enzyme catalyses L-threonyl-[protein] + ATP = O-phospho-L-threonyl-[protein] + ADP + H(+). Has a role in meiosis. In Schizosaccharomyces pombe (strain 972 / ATCC 24843) (Fission yeast), this protein is Serine/threonine-protein kinase ppk16 (ppk16).